Consider the following 182-residue polypeptide: Cytidylate kinase (182 aa).

7–15 is a binding site for ATP; sequence GLPGSGTTS.

The protein belongs to the cytidylate kinase family. Type 2 subfamily.

It is found in the cytoplasm. It carries out the reaction CMP + ATP = CDP + ADP. The enzyme catalyses dCMP + ATP = dCDP + ADP. The chain is Cytidylate kinase from Methanoregula boonei (strain DSM 21154 / JCM 14090 / 6A8).